A 245-amino-acid polypeptide reads, in one-letter code: 2,3-bisphosphoglycerate-dependent phosphoglycerate mutase (245 aa).

Substrate-binding positions include 8-15 (RHGQSLWN), 21-22 (TG), Arg-60, 87-90 (ERHY), Lys-98, 114-115 (RR), and 183-184 (GN). His-9 serves as the catalytic Tele-phosphohistidine intermediate. Glu-87 (proton donor/acceptor) is an active-site residue.

Belongs to the phosphoglycerate mutase family. BPG-dependent PGAM subfamily.

The catalysed reaction is (2R)-2-phosphoglycerate = (2R)-3-phosphoglycerate. Its pathway is carbohydrate degradation; glycolysis; pyruvate from D-glyceraldehyde 3-phosphate: step 3/5. Functionally, catalyzes the interconversion of 2-phosphoglycerate and 3-phosphoglycerate. The sequence is that of 2,3-bisphosphoglycerate-dependent phosphoglycerate mutase from Bacillus thuringiensis subsp. konkukian (strain 97-27).